We begin with the raw amino-acid sequence, 323 residues long: Sphingolipid delta(4)-desaturase/C4-monooxygenase DES2 (323 aa).

A lipid anchor (N-myristoyl glycine) is attached at Gly-2. 2 helical membrane-spanning segments follow: residues 45 to 65 (WTVT…QGLA) and 68 to 88 (WLFF…TLAI). A Histidine box-1 motif is present at residues 89 to 93 (HDISH). The segment at 95 to 99 (TAFGT) is required for C4-hydroxylase activity. Residues 128 to 132 (HVDHH) carry the Histidine box-2 motif. A helical membrane pass occupies residues 209 to 231 (MVYLLASSLLGLGLHPISGHFVA). The Histidine box-3 motif lies at 259–263 (HMEHH).

The protein belongs to the fatty acid desaturase type 1 family. DEGS subfamily.

The protein resides in the endoplasmic reticulum membrane. The catalysed reaction is a dihydroceramide + 2 Fe(II)-[cytochrome b5] + O2 + 2 H(+) = a phytoceramide + 2 Fe(III)-[cytochrome b5] + H2O. It carries out the reaction an N-acylsphinganine + 2 Fe(II)-[cytochrome b5] + O2 + 2 H(+) = an N-acylsphing-4-enine + 2 Fe(III)-[cytochrome b5] + 2 H2O. The enzyme catalyses N-octanoylsphinganine + 2 Fe(II)-[cytochrome b5] + O2 + 2 H(+) = N-octanoyl-4-hydroxysphinganine + 2 Fe(III)-[cytochrome b5] + H2O. It catalyses the reaction an N-acylsphinganine + 2 Fe(II)-[cytochrome b5] + O2 + 2 H(+) = an N-acyl-(4R)-4-hydroxysphinganine + 2 Fe(III)-[cytochrome b5] + H2O. It functions in the pathway membrane lipid metabolism; sphingolipid biosynthesis. Functionally, bifunctional enzyme which acts both as a sphingolipid delta(4)-desaturase and a sphingolipid C4-monooxygenase. This Bos taurus (Bovine) protein is Sphingolipid delta(4)-desaturase/C4-monooxygenase DES2.